A 239-amino-acid polypeptide reads, in one-letter code: Transcriptional regulatory protein BtsR (239 aa).

Residues 3–116 (KVLIVDDEPL…RLEKTLHRLR (114 aa)) form the Response regulatory domain. Aspartate 54 carries the 4-aspartylphosphate modification. The region spanning 137-239 (IPCTGHSRIY…LKSLKEAIGL (103 aa)) is the HTH LytTR-type domain.

Phosphorylated by BtsS.

Its function is as follows. Member of the two-component regulatory system BtsS/BtsR. BtsR regulates expression of btsT by binding to its promoter region. This Salmonella typhimurium (strain LT2 / SGSC1412 / ATCC 700720) protein is Transcriptional regulatory protein BtsR.